Consider the following 182-residue polypeptide: Large ribosomal subunit protein uL16 (182 aa).

The protein belongs to the universal ribosomal protein uL16 family.

In Pyrobaculum islandicum (strain DSM 4184 / JCM 9189 / GEO3), this protein is Large ribosomal subunit protein uL16.